The sequence spans 458 residues: UDP-N-acetylmuramoylalanine--D-glutamate ligase (458 aa).

124-130 is a binding site for ATP; that stretch reads GSDGKTT.

The protein belongs to the MurCDEF family.

The protein resides in the cytoplasm. It catalyses the reaction UDP-N-acetyl-alpha-D-muramoyl-L-alanine + D-glutamate + ATP = UDP-N-acetyl-alpha-D-muramoyl-L-alanyl-D-glutamate + ADP + phosphate + H(+). The protein operates within cell wall biogenesis; peptidoglycan biosynthesis. In terms of biological role, cell wall formation. Catalyzes the addition of glutamate to the nucleotide precursor UDP-N-acetylmuramoyl-L-alanine (UMA). The sequence is that of UDP-N-acetylmuramoylalanine--D-glutamate ligase from Clostridium beijerinckii (strain ATCC 51743 / NCIMB 8052) (Clostridium acetobutylicum).